The following is a 510-amino-acid chain: Serine/threonine protein phosphatase 2A 57 kDa regulatory subunit B' kappa isoform (510 aa).

The tract at residues 1–51 (MWKGFLSKLPRKTSASGRGADLDSGQCSNGAGNGNPIQRTSSCGSIPSGRS) is disordered. A compositionally biased stretch (polar residues) spans 25-51 (GQCSNGAGNGNPIQRTSSCGSIPSGRS). A phosphothreonine mark is found at Thr-476 and Thr-493. The residue at position 502 (Ser-502) is a Phosphoserine. The residue at position 508 (Thr-508) is a Phosphothreonine.

This sequence belongs to the phosphatase 2A regulatory subunit B56 family. In terms of assembly, PP2A consists of a common heteromeric enzyme, composed of a catalytic subunit (subunits C), a constant regulatory subunit (subunit A), and a variety of regulatory subunits such as subunits B (the R2/B/PR55/B55, R3/B''/PR72/PR130/PR59 and R5/B'/B56 families). Interacts with SIT1. Phosphorylated at Thr-476, Thr-493, Ser-502 and Thr-508 by SIT1. In terms of tissue distribution, expressed in root stele and epidermal cells.

The protein resides in the cytoplasm. It localises to the cytosol. The protein localises to the cell membrane. Its function is as follows. B regulatory subunit of phosphatase 2A (PP2A) involved in salt stress response. Under salt stress conditions, required for the catalytic activity of PP2A and the dephosphorylation of SIT1, a negative regulator of salt tolerance. Dephosphorylation of SIT1 turns off salt-induced SIT1 activity directly, which has a positive effect on salt tolerance. This Oryza sativa subsp. japonica (Rice) protein is Serine/threonine protein phosphatase 2A 57 kDa regulatory subunit B' kappa isoform.